Here is a 383-residue protein sequence, read N- to C-terminus: Probable L-aspartate decarboxylase (383 aa).

Lys231 bears the N6-(pyridoxal phosphate)lysine mark.

The protein belongs to the group II decarboxylase family. MfnA subfamily. Requires pyridoxal 5'-phosphate as cofactor.

It catalyses the reaction L-aspartate + H(+) = beta-alanine + CO2. The protein operates within cofactor biosynthesis; coenzyme A biosynthesis. Catalyzes the decarboxylation of L-aspartate to produce beta-alanine. The protein is Probable L-aspartate decarboxylase of Thermococcus gammatolerans (strain DSM 15229 / JCM 11827 / EJ3).